Here is a 310-residue protein sequence, read N- to C-terminus: p-hydroxybenzoic acid efflux pump subunit AaeA (310 aa).

A helical membrane pass occupies residues 12–32 (AITVVLVILAFIAIFNAWVYY).

Belongs to the membrane fusion protein (MFP) (TC 8.A.1) family.

Its subcellular location is the cell inner membrane. Its function is as follows. Forms an efflux pump with AaeB. This Escherichia coli O139:H28 (strain E24377A / ETEC) protein is p-hydroxybenzoic acid efflux pump subunit AaeA.